Reading from the N-terminus, the 72-residue chain is Metallothionein-like protein type 2 A (72 aa).

This sequence belongs to the metallothionein superfamily. Type 15 family. As to expression, leaves and roots.

Functionally, metallothioneins have a high content of cysteine residues that bind various heavy metals. In Solanum lycopersicum (Tomato), this protein is Metallothionein-like protein type 2 A (MTA).